Here is a 392-residue protein sequence, read N- to C-terminus: Chaperone protein DnaJ (392 aa).

The J domain occupies aspartate 2–glycine 67. The CR-type zinc finger occupies glycine 149–lysine 227. 8 residues coordinate Zn(2+): cysteine 162, cysteine 165, cysteine 179, cysteine 182, cysteine 201, cysteine 204, cysteine 215, and cysteine 218. CXXCXGXG motif repeat units follow at residues cysteine 162 to glycine 169, cysteine 179 to glycine 186, cysteine 201 to glycine 208, and cysteine 215 to glycine 222.

This sequence belongs to the DnaJ family. In terms of assembly, homodimer. It depends on Zn(2+) as a cofactor.

It is found in the cytoplasm. Functionally, participates actively in the response to hyperosmotic and heat shock by preventing the aggregation of stress-denatured proteins and by disaggregating proteins, also in an autonomous, DnaK-independent fashion. Unfolded proteins bind initially to DnaJ; upon interaction with the DnaJ-bound protein, DnaK hydrolyzes its bound ATP, resulting in the formation of a stable complex. GrpE releases ADP from DnaK; ATP binding to DnaK triggers the release of the substrate protein, thus completing the reaction cycle. Several rounds of ATP-dependent interactions between DnaJ, DnaK and GrpE are required for fully efficient folding. Also involved, together with DnaK and GrpE, in the DNA replication of plasmids through activation of initiation proteins. This Chlamydia caviae (strain ATCC VR-813 / DSM 19441 / 03DC25 / GPIC) (Chlamydophila caviae) protein is Chaperone protein DnaJ.